Consider the following 550-residue polypeptide: Hydroxylamine reductase (550 aa).

4 residues coordinate [2Fe-2S] cluster: C3, C6, C18, and C25. The hybrid [4Fe-2O-2S] cluster site is built by H249, E273, C317, C405, C433, C458, E492, and K494. C405 is subject to Cysteine persulfide.

Belongs to the HCP family. [2Fe-2S] cluster is required as a cofactor. Requires hybrid [4Fe-2O-2S] cluster as cofactor.

It is found in the cytoplasm. It catalyses the reaction A + NH4(+) + H2O = hydroxylamine + AH2 + H(+). Catalyzes the reduction of hydroxylamine to form NH(3) and H(2)O. This is Hydroxylamine reductase from Escherichia fergusonii (strain ATCC 35469 / DSM 13698 / CCUG 18766 / IAM 14443 / JCM 21226 / LMG 7866 / NBRC 102419 / NCTC 12128 / CDC 0568-73).